We begin with the raw amino-acid sequence, 348 residues long: tRNA pseudouridine synthase D (348 aa).

Phenylalanine 26 lines the substrate pocket. Aspartate 79 acts as the Nucleophile in catalysis. Asparagine 128 provides a ligand contact to substrate. Residues 154–302 (GVPNYFGSQR…VDPARRALLL (149 aa)) enclose the TRUD domain. Phenylalanine 328 serves as a coordination point for substrate.

The protein belongs to the pseudouridine synthase TruD family.

The enzyme catalyses uridine(13) in tRNA = pseudouridine(13) in tRNA. Responsible for synthesis of pseudouridine from uracil-13 in transfer RNAs. The polypeptide is tRNA pseudouridine synthase D (Serratia proteamaculans (strain 568)).